The sequence spans 955 residues: 2-oxoglutarate dehydrogenase E1 component (955 aa).

The protein belongs to the alpha-ketoglutarate dehydrogenase family. In terms of assembly, homodimer. Part of the 2-oxoglutarate dehydrogenase (OGDH) complex composed of E1 (2-oxoglutarate dehydrogenase), E2 (dihydrolipoamide succinyltransferase) and E3 (dihydrolipoamide dehydrogenase); the complex contains multiple copies of the three enzymatic components (E1, E2 and E3). Thiamine diphosphate is required as a cofactor.

It catalyses the reaction N(6)-[(R)-lipoyl]-L-lysyl-[protein] + 2-oxoglutarate + H(+) = N(6)-[(R)-S(8)-succinyldihydrolipoyl]-L-lysyl-[protein] + CO2. Functionally, E1 component of the 2-oxoglutarate dehydrogenase (OGDH) complex which catalyzes the decarboxylation of 2-oxoglutarate, the first step in the conversion of 2-oxoglutarate to succinyl-CoA and CO(2). The sequence is that of 2-oxoglutarate dehydrogenase E1 component from Bacillus cereus (strain ATCC 10987 / NRS 248).